The chain runs to 142 residues: Large ribosomal subunit protein uL13 (142 aa).

This sequence belongs to the universal ribosomal protein uL13 family. In terms of assembly, part of the 50S ribosomal subunit.

This protein is one of the early assembly proteins of the 50S ribosomal subunit, although it is not seen to bind rRNA by itself. It is important during the early stages of 50S assembly. This Xylella fastidiosa (strain 9a5c) protein is Large ribosomal subunit protein uL13.